We begin with the raw amino-acid sequence, 415 residues long: Elongation factor 1-gamma 1 (415 aa).

At serine 2 the chain carries N-acetylserine. In terms of domain architecture, GST N-terminal spans 2-78 (SQGTLYANFR…YLVKLSQDDK (77 aa)). A Phosphothreonine modification is found at threonine 32. Residues 89-215 (DLNAQAQIIR…KDFKFADKPL (127 aa)) form the GST C-terminal domain. The tract at residues 212–256 (DKPLSPPQKKKEKKAPAAAPAASKKKEEAKPAATETETSSKKPKH) is disordered. In terms of domain architecture, EF-1-gamma C-terminal spans 254-415 (PKHPLELLGK…KEIVDGKVLK (162 aa)).

As to quaternary structure, the eukaryotic elongation factor 1 complex (eEF1) is probably a heterohexamer. Two trimeric complexes, each composed of eEF1A (TEF1 or TEF2), eEF1Balpha (EFB1) and eEF1Bgamma (CAM1 or TEF4), are probably dimerized via the eF1Bgamma subunits. The eEF1B subcomplex with the GEF activity is formed of eEF1Balpha and eEF1Bgamma. CAM1 interacts with EFB1. Component of a complex bound to MXR1 promoter region.

The protein localises to the cytoplasm. Its subcellular location is the nucleus. It functions in the pathway protein biosynthesis; polypeptide chain elongation. Functionally, subunit of the eukaryotic elongation factor 1 complex (eEF1). Probably plays a role in anchoring the complex to other cellular components. May be involved in transcriptional regulation of MXR1. The polypeptide is Elongation factor 1-gamma 1 (CAM1) (Saccharomyces cerevisiae (strain ATCC 204508 / S288c) (Baker's yeast)).